The chain runs to 227 residues: Ribosomal RNA large subunit methyltransferase E (227 aa).

S-adenosyl-L-methionine contacts are provided by glycine 78, tryptophan 80, aspartate 103, aspartate 119, and aspartate 143. The active-site Proton acceptor is the lysine 183.

It belongs to the class I-like SAM-binding methyltransferase superfamily. RNA methyltransferase RlmE family.

It is found in the cytoplasm. The enzyme catalyses uridine(2552) in 23S rRNA + S-adenosyl-L-methionine = 2'-O-methyluridine(2552) in 23S rRNA + S-adenosyl-L-homocysteine + H(+). Functionally, specifically methylates the uridine in position 2552 of 23S rRNA at the 2'-O position of the ribose in the fully assembled 50S ribosomal subunit. The protein is Ribosomal RNA large subunit methyltransferase E of Rickettsia conorii (strain ATCC VR-613 / Malish 7).